The chain runs to 1498 residues: Methyl-CpG-binding domain protein 5 (1498 aa).

The MBD domain occupies 11 to 81 (DKEGGLAAIQ…KVFNFDPGAA (71 aa)). The required for interaction with ASXL1/2/3 stretch occupies residues 57–68 (DGTCKCGLECPL). Disordered stretches follow at residues 199-274 (PRQR…TPLS), 329-350 (HHKP…QKKP), 452-521 (RIEA…YKDI), 594-642 (LAGN…SGRA), and 1350-1377 (NGCV…PSSH). A compositionally biased stretch (pro residues) spans 333-343 (PQGPPPPPPPS). Low complexity-rich tracts occupy residues 499 to 511 (SPRP…PSTK) and 594 to 613 (LAGN…SSGN). Residues 614 to 624 (TEGHSTLNTMF) show a composition bias toward polar residues. In terms of domain architecture, PWWP spans 1385–1409 (RTFNVGDLVWGQIKGLTSWPGKFIR). The tract at residues 1473-1498 (SGTVHQIPQGDRQMRPPKPKRRKISR) is disordered. Over residues 1487–1498 (RPPKPKRRKISR) the composition is skewed to basic residues.

In terms of assembly, core component of the polycomb repressive deubiquitinase (PR-DUB) complex, at least composed of BAP1, one of ASXL1, ASXL2 or (probably) ASXL3, and one of MBD5 or MBD6. Distinct combinations of ASXL and MBD proteins may preferentially bind specific histone modification marks. The PR-DUB core associates with a number of accessory proteins, including FOXK1, FOXK2, KDM1B, HCFC1 and OGT; KDM1B specifically associates with ASXL2 PR-DUB complexes. Interacts (via MBD domain) with ASXL1, ASXL2 and ASXL3 (via PHD domain); the interaction is probably direct, mediates association with other PR-DUB complex core components. As to expression, expressed at highest levels in adult testis and Brain. Expressed at highest levels in the oocyte.

It is found in the nucleus. The protein resides in the chromosome. Functionally, non-catalytic component of the polycomb repressive deubiquitinase (PR-DUB) complex, a complex that specifically mediates deubiquitination of histone H2A monoubiquitinated at 'Lys-120' (H2AK119ub1). Important for stability of PR-DUB components and stimulating its ubiquitinase activity. As part of the PR-DUB complex, associates with chromatin enriched in histone marks H3K4me1, H3K4me3, and H3K27Ac, but not in H3K27me3. The PR-DUB complex is an epigenetic regulator of gene expression, including genes involved in cell growth and survivability. MBD5 and MBD6 containing complexes associate with distinct chromatin regions enriched in genes involved in different pathways. Heterochromatin recruitment is not mediated by DNA methylation. The PR-DUB complex is an epigenetic regulator of gene expression, including genes involved in development, cell communication, signaling, cell proliferation and cell viability. In Mus musculus (Mouse), this protein is Methyl-CpG-binding domain protein 5 (Mbd5).